The chain runs to 468 residues: UDP-N-acetylmuramoyl-L-alanine--L-glutamate ligase (468 aa).

122 to 128 (GTKGKST) lines the ATP pocket.

The protein belongs to the MurCDEF family. MurD2 subfamily.

The protein localises to the cytoplasm. The catalysed reaction is UDP-N-acetyl-alpha-D-muramoyl-L-alanine + L-glutamate + ATP = UDP-N-acetyl-alpha-D-muramoyl-L-alanyl-L-glutamate + ADP + phosphate + H(+). The protein operates within cell wall biogenesis; peptidoglycan biosynthesis. Cell wall formation. Catalyzes the addition of L-glutamate to the nucleotide precursor UDP-N-acetylmuramoyl-L-alanine. In Xylella fastidiosa (strain Temecula1 / ATCC 700964), this protein is UDP-N-acetylmuramoyl-L-alanine--L-glutamate ligase.